Reading from the N-terminus, the 229-residue chain is PKHD-type hydroxylase Rpal_3968 (229 aa).

The Fe2OG dioxygenase domain occupies 78–180 (QIFPPLFNRY…RVASFFWLQS (103 aa)). The Fe cation site is built by His98, Asp100, and His161. Arg171 contributes to the 2-oxoglutarate binding site.

The cofactor is Fe(2+). Requires L-ascorbate as cofactor.

This Rhodopseudomonas palustris (strain TIE-1) protein is PKHD-type hydroxylase Rpal_3968.